We begin with the raw amino-acid sequence, 354 residues long: NADH-quinone oxidoreductase subunit H (354 aa).

The next 8 membrane-spanning stretches (helical) occupy residues 22-42, 91-111, 124-144, 162-182, 203-223, 250-270, 291-311, and 326-346; these read ILIRAVLIVVPVLLCVAYLIL, YLVAPLMVLMPAVAVWAVIPF, LLYVMAISSVGVYGVILAGWA, VSYEIAMGFALVTVLMVSGSL, LLSWNWLPLLPMFGVYFISGV, GMTFALFFLAEYINMIIISTM, IPGFFWLVIKVFLLLSVFIWI, and LGWKIFIPLTVAWLIIVAIWI.

Belongs to the complex I subunit 1 family. NDH-1 is composed of 14 different subunits. Subunits NuoA, H, J, K, L, M, N constitute the membrane sector of the complex.

The protein localises to the cell inner membrane. It carries out the reaction a quinone + NADH + 5 H(+)(in) = a quinol + NAD(+) + 4 H(+)(out). Functionally, NDH-1 shuttles electrons from NADH, via FMN and iron-sulfur (Fe-S) centers, to quinones in the respiratory chain. The immediate electron acceptor for the enzyme in this species is believed to be ubiquinone. Couples the redox reaction to proton translocation (for every two electrons transferred, four hydrogen ions are translocated across the cytoplasmic membrane), and thus conserves the redox energy in a proton gradient. This subunit may bind ubiquinone. In Cupriavidus metallidurans (strain ATCC 43123 / DSM 2839 / NBRC 102507 / CH34) (Ralstonia metallidurans), this protein is NADH-quinone oxidoreductase subunit H.